We begin with the raw amino-acid sequence, 466 residues long: Signal recognition particle 54 kDa protein (466 aa).

Residues 104 to 111, 184 to 188, and 242 to 245 contribute to the GTP site; these read GLQGSGKT, DTAGR, and TKLD. Positions 446–466 are disordered; sequence QQQGGGGMGGLGGGGGLGPFG. A compositionally biased stretch (gly residues) spans 448–466; sequence QGGGGMGGLGGGGGLGPFG.

The protein belongs to the GTP-binding SRP family. SRP54 subfamily. In terms of assembly, part of the signal recognition particle protein translocation system, which is composed of SRP and FtsY. Archaeal SRP consists of a 7S RNA molecule of 300 nucleotides and two protein subunits: SRP54 and SRP19.

The protein localises to the cytoplasm. It catalyses the reaction GTP + H2O = GDP + phosphate + H(+). Functionally, involved in targeting and insertion of nascent membrane proteins into the cytoplasmic membrane. Binds to the hydrophobic signal sequence of the ribosome-nascent chain (RNC) as it emerges from the ribosomes. The SRP-RNC complex is then targeted to the cytoplasmic membrane where it interacts with the SRP receptor FtsY. This Haloquadratum walsbyi (strain DSM 16790 / HBSQ001) protein is Signal recognition particle 54 kDa protein.